The sequence spans 584 residues: WD repeat-containing protein JIP5 (584 aa).

WD repeat units lie at residues 128-173, 180-219, 269-314, and 378-415; these read RHKG…GKVD, SAKD…GTNK, DQED…LADQ, and DAVD…DQEE. 2 disordered regions span residues 409 to 497 and 516 to 563; these read YSDD…SEYI and KKLI…EKKV. 2 stretches are compositionally biased toward acidic residues: residues 412–429 and 450–460; these read DQEE…EEDS and FDSENNDDGEE. Composition is skewed to basic and acidic residues over residues 483 to 493 and 528 to 552; these read TRNEENKDNTK and SKKE…EVPQ.

It belongs to the WD repeat WDR55 family.

The protein resides in the nucleus. The protein localises to the nucleolus. The protein is WD repeat-containing protein JIP5 (JIP5) of Lodderomyces elongisporus (strain ATCC 11503 / CBS 2605 / JCM 1781 / NBRC 1676 / NRRL YB-4239) (Yeast).